The chain runs to 91 residues: Cell division topological specificity factor (91 aa).

Belongs to the MinE family.

Prevents the cell division inhibition by proteins MinC and MinD at internal division sites while permitting inhibition at polar sites. This ensures cell division at the proper site by restricting the formation of a division septum at the midpoint of the long axis of the cell. This chain is Cell division topological specificity factor, found in Desulfitobacterium hafniense (strain DSM 10664 / DCB-2).